We begin with the raw amino-acid sequence, 388 residues long: uncharacterized protein (388 aa).

Helical transmembrane passes span 18–38 (AAMFLNYLTIGIPLVMLPLYV), 42–62 (LHLSDLLIGIAVGSQFIATLL), 89–111 (ASGLLMLVSLIAHPVPLLAWAIL), 116–136 (VLLGIGESFILTGNLTWGMWL), 145–165 (VISWNGMATYGALAIGAPLGL), 171–191 (AGLALPALLVVLLPIIASGVI), 219–239 (TGLVLQGIGFATLSAFTALWF), 248–268 (GFAMTLFGIAFIAVRFFCAKF), 287–307 (TGLAVMWAAPSAGAALIGAAI), 341–361 (AFQDLAYGFTGPIAGLLTPFI), and 365–385 (QVFLLAAACALLGAAVVHLLL).

This sequence belongs to the major facilitator superfamily. YfcJ family.

It localises to the cell inner membrane. This is an uncharacterized protein from Salmonella typhimurium (strain LT2 / SGSC1412 / ATCC 700720).